The chain runs to 283 residues: Dihydropteroate synthase type-1 (283 aa).

The region spanning 6–262 is the Pterin-binding domain; it reads VTVFGILNLT…APGDLRSAIT (257 aa). Asn-13 contacts Mg(2+). (7,8-dihydropterin-6-yl)methyl diphosphate-binding positions include Asp-86, Asn-105, Asp-177, Lys-216, and 250-252; that span reads RTH.

This sequence belongs to the DHPS family. As to quaternary structure, homodimer or homotrimer. The cofactor is Mg(2+).

The enzyme catalyses (7,8-dihydropterin-6-yl)methyl diphosphate + 4-aminobenzoate = 7,8-dihydropteroate + diphosphate. Its pathway is cofactor biosynthesis; tetrahydrofolate biosynthesis; 7,8-dihydrofolate from 2-amino-4-hydroxy-6-hydroxymethyl-7,8-dihydropteridine diphosphate and 4-aminobenzoate: step 1/2. Functionally, catalyzes the condensation of para-aminobenzoate (pABA) with 6-hydroxymethyl-7,8-dihydropterin diphosphate (DHPt-PP) to form 7,8-dihydropteroate (H2Pte), the immediate precursor of folate derivatives. Implicated in resistance to sulfonamide. The chain is Dihydropteroate synthase type-1 (sulI) from Mycolicibacterium fortuitum (Mycobacterium fortuitum).